The chain runs to 378 residues: Probable portal protein (378 aa).

It belongs to the skunalikevirus portal protein family. Homododecamer.

The protein localises to the virion. Its function is as follows. Forms the portal vertex of the capsid. This portal plays critical roles in head assembly, genome packaging, neck/tail attachment, and genome ejection. The portal protein multimerizes as a single ring-shaped homododecamer arranged around a central channel. Binds to the terminase subunits to form the packaging machine. Necessary to ensure correct procapsid size during capsid assembly. Once the capsid is packaged with the DNA, the terminase complex is substituted by the connector proteins gp15. The polypeptide is Probable portal protein (Lactococcus phage p2 (Lactococcus lactis bacteriophage p2)).